The primary structure comprises 325 residues: Phenylalanine--tRNA ligase alpha subunit (325 aa).

A Mg(2+)-binding site is contributed by glutamate 251.

It belongs to the class-II aminoacyl-tRNA synthetase family. Phe-tRNA synthetase alpha subunit type 1 subfamily. In terms of assembly, tetramer of two alpha and two beta subunits. It depends on Mg(2+) as a cofactor.

Its subcellular location is the cytoplasm. The enzyme catalyses tRNA(Phe) + L-phenylalanine + ATP = L-phenylalanyl-tRNA(Phe) + AMP + diphosphate + H(+). The sequence is that of Phenylalanine--tRNA ligase alpha subunit from Thermotoga neapolitana (strain ATCC 49049 / DSM 4359 / NBRC 107923 / NS-E).